The following is a 276-amino-acid chain: Ribosomal RNA small subunit methyltransferase A (276 aa).

Residues Asn28, Leu30, Gly55, Glu77, Asp103, and Asn124 each coordinate S-adenosyl-L-methionine.

It belongs to the class I-like SAM-binding methyltransferase superfamily. rRNA adenine N(6)-methyltransferase family. RsmA subfamily.

The protein localises to the cytoplasm. The catalysed reaction is adenosine(1518)/adenosine(1519) in 16S rRNA + 4 S-adenosyl-L-methionine = N(6)-dimethyladenosine(1518)/N(6)-dimethyladenosine(1519) in 16S rRNA + 4 S-adenosyl-L-homocysteine + 4 H(+). In terms of biological role, specifically dimethylates two adjacent adenosines (A1518 and A1519) in the loop of a conserved hairpin near the 3'-end of 16S rRNA in the 30S particle. May play a critical role in biogenesis of 30S subunits. This is Ribosomal RNA small subunit methyltransferase A from Agrobacterium fabrum (strain C58 / ATCC 33970) (Agrobacterium tumefaciens (strain C58)).